Here is a 938-residue protein sequence, read N- to C-terminus: Isoleucine--tRNA ligase (938 aa).

Residues 58–68 carry the 'HIGH' region motif; the sequence is PYANGSIHIGH. E561 is a binding site for L-isoleucyl-5'-AMP. The 'KMSKS' region signature appears at 602 to 606; the sequence is KMSKS. K605 contributes to the ATP binding site. C901, C904, C921, and C924 together coordinate Zn(2+).

The protein belongs to the class-I aminoacyl-tRNA synthetase family. IleS type 1 subfamily. Monomer. The cofactor is Zn(2+).

The protein resides in the cytoplasm. It carries out the reaction tRNA(Ile) + L-isoleucine + ATP = L-isoleucyl-tRNA(Ile) + AMP + diphosphate. Catalyzes the attachment of isoleucine to tRNA(Ile). As IleRS can inadvertently accommodate and process structurally similar amino acids such as valine, to avoid such errors it has two additional distinct tRNA(Ile)-dependent editing activities. One activity is designated as 'pretransfer' editing and involves the hydrolysis of activated Val-AMP. The other activity is designated 'posttransfer' editing and involves deacylation of mischarged Val-tRNA(Ile). The sequence is that of Isoleucine--tRNA ligase from Cronobacter sakazakii (strain ATCC BAA-894) (Enterobacter sakazakii).